Reading from the N-terminus, the 161-residue chain is Protein-export protein SecB (161 aa).

The protein belongs to the SecB family. As to quaternary structure, homotetramer, a dimer of dimers. One homotetramer interacts with 1 SecA dimer.

It localises to the cytoplasm. In terms of biological role, one of the proteins required for the normal export of preproteins out of the cell cytoplasm. It is a molecular chaperone that binds to a subset of precursor proteins, maintaining them in a translocation-competent state. It also specifically binds to its receptor SecA. The sequence is that of Protein-export protein SecB from Pseudomonas fluorescens (strain Pf0-1).